The following is a 221-amino-acid chain: Probable transaldolase (221 aa).

Lysine 87 (schiff-base intermediate with substrate) is an active-site residue.

The protein belongs to the transaldolase family. Type 3B subfamily.

Its subcellular location is the cytoplasm. It catalyses the reaction D-sedoheptulose 7-phosphate + D-glyceraldehyde 3-phosphate = D-erythrose 4-phosphate + beta-D-fructose 6-phosphate. The protein operates within carbohydrate degradation; pentose phosphate pathway; D-glyceraldehyde 3-phosphate and beta-D-fructose 6-phosphate from D-ribose 5-phosphate and D-xylulose 5-phosphate (non-oxidative stage): step 2/3. In terms of biological role, transaldolase is important for the balance of metabolites in the pentose-phosphate pathway. The polypeptide is Probable transaldolase (Syntrophobacter fumaroxidans (strain DSM 10017 / MPOB)).